The following is a 391-amino-acid chain: Phosphoprotein (391 aa).

Phosphothreonine occurs at positions 10 and 16. Polar residues predominate over residues 54–65 (QKNIQHPTASHQ). Disordered regions lie at residues 54–98 (QKNI…EPLF) and 145–186 (TSTP…RSGS). The residue at position 69 (S69) is a Phosphoserine. 3 positions are modified to phosphothreonine: T91, T150, and T165. A Phosphoserine modification is found at S188. Positions 218-245 (ANEIMDLLRGMDARLQHLEQKVDKVLAQ) form a coiled coil. Phosphothreonine is present on T250. The residue at position 257 (S257) is a Phosphoserine. A phosphothreonine mark is found at T258 and T282. A phosphoserine mark is found at S292 and S294. A Phosphothreonine modification is found at T298. S301 and S374 each carry phosphoserine. Residues 343 to 391 (AGRKVMITKMITDCVANPQMKQAFEQRLAKASTEDALNDIKRDIIRNAI) are interaction with the nucleoprotein. T375 bears the Phosphothreonine mark.

This sequence belongs to the rubulavirus/avulavirus P protein family. As to quaternary structure, homotetramer. Interacts (via multimerization domain) with polymerase L; this interaction forms the polymerase L-P complex. Interacts (via N-terminus) with N0 (via Ncore); this interaction allows P to chaperon N0 to avoid N polymerization before encapsidation. Interacts (via C-terminus) with N-RNA template; this interaction positions the polymerase on the template for both transcription and replication. Interacts with host RPS6KB1 kinase; this interaction may play a role in the viral replication and transcription.

The protein localises to the virion. Essential cofactor of the RNA polymerase L that plays a central role in the transcription and replication by forming the polymerase complex with RNA polymerase L and recruiting L to the genomic N-RNA template for RNA synthesis. Also plays a central role in the encapsidation of nascent RNA chains by forming the encapsidation complex with the nucleocapsid protein N (N-P complex). Acts as a chaperone for newly synthesized free N protein, so-called N0, allowing encapsidation of nascent RNA chains during replication. The nucleoprotein protein N prevents excessive phosphorylation of P, which leads to down-regulation of viral transcription/ replication. Participates, together with N, in the formation of viral factories (viroplasms), which are large inclusions in the host cytoplasm where replication takes place. The chain is Phosphoprotein from Mumps virus genotype N (strain L-Zagreb vaccine) (MuV).